Here is a 141-residue protein sequence, read N- to C-terminus: Endoribonuclease YbeY (141 aa).

Residues H101, H105, and H111 each contribute to the Zn(2+) site.

It belongs to the endoribonuclease YbeY family. It depends on Zn(2+) as a cofactor.

Its subcellular location is the cytoplasm. Its function is as follows. Single strand-specific metallo-endoribonuclease involved in late-stage 70S ribosome quality control and in maturation of the 3' terminus of the 16S rRNA. The sequence is that of Endoribonuclease YbeY from Nitrosomonas eutropha (strain DSM 101675 / C91 / Nm57).